A 130-amino-acid chain; its full sequence is Small ribosomal subunit protein eS8 (130 aa).

Belongs to the eukaryotic ribosomal protein eS8 family. Part of the 30S ribosomal subunit.

This chain is Small ribosomal subunit protein eS8, found in Thermococcus onnurineus (strain NA1).